We begin with the raw amino-acid sequence, 166 residues long: NAD(P)H-quinone oxidoreductase subunit I, chloroplastic (166 aa).

4Fe-4S ferredoxin-type domains are found at residues 55–84 and 95–124; these read GRIHFEFDKCIACEVCVRVCPIDLPVVDWK and LNYSIDFGICIFCGNCVEYCPTNCLSMTEE. [4Fe-4S] cluster-binding residues include cysteine 64, cysteine 67, cysteine 70, cysteine 74, cysteine 104, cysteine 107, cysteine 110, and cysteine 114.

This sequence belongs to the complex I 23 kDa subunit family. In terms of assembly, NDH is composed of at least 16 different subunits, 5 of which are encoded in the nucleus. It depends on [4Fe-4S] cluster as a cofactor.

It localises to the plastid. It is found in the chloroplast thylakoid membrane. It carries out the reaction a plastoquinone + NADH + (n+1) H(+)(in) = a plastoquinol + NAD(+) + n H(+)(out). It catalyses the reaction a plastoquinone + NADPH + (n+1) H(+)(in) = a plastoquinol + NADP(+) + n H(+)(out). NDH shuttles electrons from NAD(P)H:plastoquinone, via FMN and iron-sulfur (Fe-S) centers, to quinones in the photosynthetic chain and possibly in a chloroplast respiratory chain. The immediate electron acceptor for the enzyme in this species is believed to be plastoquinone. Couples the redox reaction to proton translocation, and thus conserves the redox energy in a proton gradient. The sequence is that of NAD(P)H-quinone oxidoreductase subunit I, chloroplastic from Laphamia lindheimeri (Lindheimer's rockdaisy).